The primary structure comprises 215 residues: Nascent polypeptide-associated complex subunit alpha (215 aa).

The disordered stretch occupies residues 1-81; that stretch reads MPGEATETVP…SEKKARKAMS (81 aa). Positions 9–28 are enriched in polar residues; the sequence is VPATEQELPQPQAETGSGTE. A compositionally biased stretch (acidic residues) spans 29-40; sequence SDSDESVPELEG. At Ser43 the chain carries Phosphoserine; by ILK1. Over residues 44-57 the composition is skewed to low complexity; the sequence is TQATTQQAQLAAAA. The interval 69-80 is required for DNA-binding; it reads QSRSEKKARKAM. An NAC-A/B domain is found at 70–135; it reads SRSEKKARKA…AKIEDLSQQA (66 aa). The tract at residues 93–108 is RNA/DNA-binding; it reads RVTIRKSKNILFVITK. Ser132 carries the phosphoserine modification. Lys142 is subject to N6-acetyllysine; alternate. Lys142 is covalently cross-linked (Glycyl lysine isopeptide (Lys-Gly) (interchain with G-Cter in SUMO2); alternate). The residue at position 159 (Thr159) is a Phosphothreonine; by GSK3-beta. Thr161 is modified (phosphothreonine). Ser166, Ser186, Ser191, and Ser203 each carry phosphoserine. Residues 176–213 enclose the UBA domain; sequence VEVKDIEWVMSQANVSRAKAVRALKNNSNNIVNAIMEL.

The protein belongs to the NAC-alpha family. Part of the nascent polypeptide-associated complex (NAC), which is a heterodimer of NACA and BTF3 (via NAC-A/B domains). NAC associates with ribosomes through the BTF3/NACB subunit and contacts the ribosomal protein L23, which is positioned near the exiting site. Both subunits can contact nascent polypeptide chains. NACA may also form homodimers, and only this form binds DNA. Interacts with TBP and JUN. Post-translationally, phosphorylation of Ser-43 by ILK during cell adhesion may promote nuclear localization. Phosphorylation of Thr-159 by GSK3B may promote proteasome mediated degradation.

It is found in the cytoplasm. The protein localises to the nucleus. Functionally, prevents inappropriate targeting of non-secretory polypeptides to the endoplasmic reticulum (ER). Binds to nascent polypeptide chains as they emerge from the ribosome and blocks their interaction with the signal recognition particle (SRP), which normally targets nascent secretory peptides to the ER. Also reduces the inherent affinity of ribosomes for protein translocation sites in the ER membrane (M sites). May act as a specific coactivator for JUN, binding to DNA and stabilizing the interaction of JUN homodimers with target gene promoters. The chain is Nascent polypeptide-associated complex subunit alpha from Chinchilla lanigera (Long-tailed chinchilla).